A 144-amino-acid chain; its full sequence is Transcription antitermination protein NusB (144 aa).

This sequence belongs to the NusB family.

In terms of biological role, involved in transcription antitermination. Required for transcription of ribosomal RNA (rRNA) genes. Binds specifically to the boxA antiterminator sequence of the ribosomal RNA (rrn) operons. In Streptomyces avermitilis (strain ATCC 31267 / DSM 46492 / JCM 5070 / NBRC 14893 / NCIMB 12804 / NRRL 8165 / MA-4680), this protein is Transcription antitermination protein NusB.